The chain runs to 532 residues: MNKNMLVRSARPTLASIHRLFSAAAAATVDTATAPVVKPRSGGGKGGESANKKETVVGGRDTLGGRLLSLVYTKRSAVVTIRKWKEEGHSVRKYELNRIVRELRKIKRYKHALEICEWMVVQEDIKLQAGDYAVHLDLISKIRGLNSAEKFFEDMPDQMRGHAACTSLLHSYVQNKLSDKAEALFEKMGECGFLKSCLPYNHMLSMYISRGQFEKVPVLIKELKIRTSPDIVTYNLWLTAFASGNDVEGAEKVYLKAKEEKLNPDWVTYSVLTNLYAKTDNVEKARLALKEMEKLVSKKNRVAYASLISLHANLGDKDGVNLTWKKVKSSFKKMNDAEYLSMISAVVKLGEFEQAKGLYDEWESVSGTGDARIPNLILAEYMNRDEVLLGEKFYERIVEKGINPSYSTWEILTWAYLKRKDMEKVLDCFGKAIDSVKKWTVNVRLVKGACKELEEQGNVKGAEKLMTLLQKAGYVNTQLYNSLLRTYAKAGEMALIVEERMAKDNVELDEETKELIRLTSQMRVTEISSTIS.

A mitochondrion-targeting transit peptide spans 1–28 (MNKNMLVRSARPTLASIHRLFSAAAAAT). A disordered region spans residues 35–56 (PVVKPRSGGGKGGESANKKETV). 10 PPR repeats span residues 161-195 (GHAA…GFLK), 196-226 (SCLP…LKIR), 230-264 (DIVT…KLNP), 265-295 (DWVT…MEKL), 300-330 (NRVA…VKSS), 335-365 (NDAE…WESV), 370-404 (DARI…GINP), 405-435 (SYST…AIDS), 442-472 (NVRL…LQKA), and 476-512 (NTQL…DEET).

The protein belongs to the PPR family. P subfamily.

Its subcellular location is the mitochondrion. The chain is Pentatricopeptide repeat-containing protein At4g02820, mitochondrial from Arabidopsis thaliana (Mouse-ear cress).